The primary structure comprises 364 residues: Inactive protein RESTRICTED TEV MOVEMENT 2 (364 aa).

Residues 14 to 121 (VQYEDFVPKS…LPETSRTEAA (108 aa)) form the sHSP domain. The A-1 repeat unit spans residues 129-133 (LEEKR). Positions 129 to 220 (LEEKRLLEES…LEERRLEERK (92 aa)) are 6 X 5 AA repeats A of L-E-E-[SKR]-[ERK]. One copy of the A-2 repeat lies at 135 to 139 (LEESR). The A-3 repeat unit spans residues 156–160 (LEEKE). The stretch at 163-176 (IRKLQEEAKAKEEA) is one B-1 repeat. Positions 163–206 (IRKLQEEAKAKEEAEMRKLQEEAKAKEEAAAKKLQEEIEAKEKL) are 3 X 14 AA repeats B of [IMA]-[RK]-K-L-Q-E-E-A-K-A-K-E-[EK]-[LA]. One copy of the B-2 repeat lies at 178–191 (MRKLQEEAKAKEEA). Residues 193–205 (AKKLQEEIEAKEK) form a B-3 repeat. Residues 206–210 (LEERK) form an A-4 repeat. The stretch at 211 to 215 (LEERR) is one A-5 repeat. One copy of the A-6 repeat lies at 216–220 (LEERK). A helical membrane pass occupies residues 322-342 (LMMNVGVAALVIFALGAYVSY). The disordered stretch occupies residues 345–364 (CSSSSSSSSPSSSSSSTKPE). The segment covering 346 to 364 (SSSSSSSSPSSSSSSTKPE) has biased composition (low complexity).

Belongs to the small heat shock protein (HSP20) family.

Its subcellular location is the cell membrane. In terms of biological role, seems to not be involved in heat resistance. Unable to mediate restriction of long-distance movement of the pathogenic tobacco etch virus (TEV) without causing a hypersensitive response or inducing systemic acquired resistance. This Arabidopsis thaliana (Mouse-ear cress) protein is Inactive protein RESTRICTED TEV MOVEMENT 2 (RTM2).